The chain runs to 545 residues: Phenylalanine--tRNA ligase beta subunit (545 aa).

One can recognise a B5 domain in the interval 270–346; it reads LEPKERLLTT…KGYGYENIKV (77 aa). Mg(2+) contacts are provided by Asp324, Asp330, Glu333, and Asp334.

Belongs to the phenylalanyl-tRNA synthetase beta subunit family. Type 2 subfamily. As to quaternary structure, tetramer of two alpha and two beta subunits. It depends on Mg(2+) as a cofactor.

The protein localises to the cytoplasm. The catalysed reaction is tRNA(Phe) + L-phenylalanine + ATP = L-phenylalanyl-tRNA(Phe) + AMP + diphosphate + H(+). This is Phenylalanine--tRNA ligase beta subunit from Methanosarcina acetivorans (strain ATCC 35395 / DSM 2834 / JCM 12185 / C2A).